Consider the following 215-residue polypeptide: 3,4-dihydroxy-2-butanone 4-phosphate synthase (215 aa).

Residues 38-39 (RE), D43, 151-155 (RRGHT), and E175 each bind D-ribulose 5-phosphate. Mg(2+) is bound at residue E39. Mg(2+) is bound at residue H154.

It belongs to the DHBP synthase family. Homodimer. Mg(2+) serves as cofactor. Mn(2+) is required as a cofactor.

It carries out the reaction D-ribulose 5-phosphate = (2S)-2-hydroxy-3-oxobutyl phosphate + formate + H(+). It functions in the pathway cofactor biosynthesis; riboflavin biosynthesis; 2-hydroxy-3-oxobutyl phosphate from D-ribulose 5-phosphate: step 1/1. Its function is as follows. Catalyzes the conversion of D-ribulose 5-phosphate to formate and 3,4-dihydroxy-2-butanone 4-phosphate. This chain is 3,4-dihydroxy-2-butanone 4-phosphate synthase, found in Haemophilus influenzae (strain PittGG).